The sequence spans 337 residues: Phenylalanine--tRNA ligase alpha subunit (337 aa).

Glutamate 252 contacts Mg(2+).

It belongs to the class-II aminoacyl-tRNA synthetase family. Phe-tRNA synthetase alpha subunit type 1 subfamily. As to quaternary structure, tetramer of two alpha and two beta subunits. The cofactor is Mg(2+).

The protein resides in the cytoplasm. The enzyme catalyses tRNA(Phe) + L-phenylalanine + ATP = L-phenylalanyl-tRNA(Phe) + AMP + diphosphate + H(+). The protein is Phenylalanine--tRNA ligase alpha subunit of Saccharophagus degradans (strain 2-40 / ATCC 43961 / DSM 17024).